A 112-amino-acid polypeptide reads, in one-letter code: Putative pterin-4-alpha-carbinolamine dehydratase (112 aa).

The protein belongs to the pterin-4-alpha-carbinolamine dehydratase family.

The enzyme catalyses (4aS,6R)-4a-hydroxy-L-erythro-5,6,7,8-tetrahydrobiopterin = (6R)-L-erythro-6,7-dihydrobiopterin + H2O. The chain is Putative pterin-4-alpha-carbinolamine dehydratase from Shewanella halifaxensis (strain HAW-EB4).